We begin with the raw amino-acid sequence, 333 residues long: Photosystem II assembly lipoprotein Ycf48 (333 aa).

Positions 1–23 are cleaved as a signal peptide; sequence MKRLLNSATQLLLVLVLGISLSG. Cysteine 24 carries N-palmitoyl cysteine lipidation. A lipid anchor (S-diacylglycerol cysteine) is attached at cysteine 24.

Belongs to the Ycf48 family. In terms of assembly, part of early PSII assembly complexes which includes D1 (psbA) and PsbI; not found in mature PSII. Binds to the lumenal side of PSII complexes. Interacts with YidC.

Its subcellular location is the cellular thylakoid membrane. A factor required for optimal assembly of photosystem II (PSII), acting in the early stages of PSII assembly. Also plays a role in replacement of photodamaged D1 (psbA). Assists YidC in synthesis of chlorophyll-binding proteins. The protein is Photosystem II assembly lipoprotein Ycf48 of Synechococcus sp. (strain CC9605).